The following is a 165-amino-acid chain: Ubiquitin-conjugating enzyme E2 G2 (165 aa).

An N-acetylalanine modification is found at Ala-2. The UBC core domain maps to Thr-4–Gly-164. Residue Cys-89 is the Glycyl thioester intermediate of the active site.

It belongs to the ubiquitin-conjugating enzyme family. In terms of assembly, interacts with AUP1 (via C-terminus); the interaction recruits UBE2G2 to lipid droplets. Interacts with ubiquitin ligases AMFR/gp78 and RNF139/TRC8; recruitment to lipid droplets by AUP1 facilitates interaction of UBE2G2 with AMFR and RNF139, leading to sterol-induced ubiquitination of 3-hydroxy-3-methylglutaryl coenzyme A reductase and its subsequent proteasomal degradation.

The protein localises to the endoplasmic reticulum. Its subcellular location is the lipid droplet. The enzyme catalyses S-ubiquitinyl-[E1 ubiquitin-activating enzyme]-L-cysteine + [E2 ubiquitin-conjugating enzyme]-L-cysteine = [E1 ubiquitin-activating enzyme]-L-cysteine + S-ubiquitinyl-[E2 ubiquitin-conjugating enzyme]-L-cysteine.. It participates in protein modification; protein ubiquitination. In terms of biological role, accepts ubiquitin from the E1 complex and catalyzes its covalent attachment to other proteins. In vitro catalyzes 'Lys-48'-linked polyubiquitination. Involved in endoplasmic reticulum-associated degradation (ERAD). Required for sterol-induced ubiquitination of 3-hydroxy-3-methylglutaryl coenzyme A reductase and its subsequent proteasomal degradation. In Homo sapiens (Human), this protein is Ubiquitin-conjugating enzyme E2 G2.